The primary structure comprises 211 residues: Arginine exporter protein ArgO (211 aa).

6 consecutive transmembrane segments (helical) span residues 1-21 (MLSY…PLGP), 37-57 (LMIA…GIFG), 68-88 (LLAL…FGAL), 111-131 (IIAT…DTFV), 147-167 (WFAL…ALLA), and 186-206 (LVGL…IHHI).

This sequence belongs to the LysE/ArgO transporter (TC 2.A.75) family.

It localises to the cell inner membrane. The catalysed reaction is L-arginine(in) = L-arginine(out). Functionally, involved in the export of arginine. Important to control the intracellular level of arginine and the correct balance between arginine and lysine. This is Arginine exporter protein ArgO from Enterobacter sp. (strain 638).